The sequence spans 289 residues: MRVGVVGHRGYVGLPAVLNTLLDSAPALNFTLAFEEELWDMAEEGERLTQDTPIDAMITLGGDGTLLRGARLVNGRKIPILGVNFGRLGFLTSCSADEMEDGVQRLARGDFVSEPRMVLESCAIDGDRSERCRWRALNDVVMHKGGFARLVKFSVLVDGEHIGSYSADGLIISTPTGSTGYSLSAGGPIVMPTFESIVLTPVSPHTLAMRPLVLPADVEVTVRADDGPEELLVTVDGQVGTTFTGGETLIVRRAPEPVHIVRLPGATFFTRLRHKLGWGGLSGRDGEAT.

The active-site Proton acceptor is D63. Residues 63–64 (DG), R68, 138–139 (ND), R149, D168, 179–184 (TGYSLS), and Q238 contribute to the NAD(+) site.

The protein belongs to the NAD kinase family. The cofactor is a divalent metal cation.

The protein localises to the cytoplasm. It carries out the reaction NAD(+) + ATP = ADP + NADP(+) + H(+). Involved in the regulation of the intracellular balance of NAD and NADP, and is a key enzyme in the biosynthesis of NADP. Catalyzes specifically the phosphorylation on 2'-hydroxyl of the adenosine moiety of NAD to yield NADP. This Gemmatimonas aurantiaca (strain DSM 14586 / JCM 11422 / NBRC 100505 / T-27) protein is NAD kinase.